Consider the following 387-residue polypeptide: MDVTTSAWSETTRRISEPSTLQGTLGSLDKAEDHSSSIFSGFAALLAILLVVAVICVLWCCGKRKKRQVPYLRVTIMPLLTLPRPRQRAKNIYDLLPRRQEELGRHPSRSIRIVSTESLLSRNSDSPSSEHVPSRAGDALHMHRAHTHAMGYAVGIYDNAMRPQMCGNLAPSPHYVNVRASRGSPSTSSEDSRDYVNIPTAKEIAETLASASNPPRNLFILPGTKELAPSEEIDEGCGNASDCTSLGSPGTENSDPLSDGEGSSQTSNDYVNMAELDLGTPQGKQLQGMFQCRRDYENVPPGPSSNKQQEEEVTSSNTDHVEGRTDGPETHTPPAVQSGSFLALKDHVACQSSAHSETGPWEDAEETSSEDSHDYENVCAAEAGARG.

The Extracellular segment spans residues 1 to 37 (MDVTTSAWSETTRRISEPSTLQGTLGSLDKAEDHSSS). The helical; Signal-anchor for type III membrane protein transmembrane segment at 38 to 58 (IFSGFAALLAILLVVAVICVL) threads the bilayer. The Cytoplasmic portion of the chain corresponds to 59–387 (WCCGKRKKRQ…VCAAEAGARG (329 aa)). Positions 114-136 (VSTESLLSRNSDSPSSEHVPSRA) are disordered. A compositionally biased stretch (low complexity) spans 118–129 (SLLSRNSDSPSS). Position 195 is a phosphotyrosine (tyrosine 195). Positions 230 to 268 (SEEIDEGCGNASDCTSLGSPGTENSDPLSDGEGSSQTSN) are disordered. A compositionally biased stretch (polar residues) spans 241-268 (SDCTSLGSPGTENSDPLSDGEGSSQTSN). Phosphotyrosine is present on residues tyrosine 270 and tyrosine 296. The tract at residues 294 to 387 (RDYENVPPGP…VCAAEAGARG (94 aa)) is disordered. The span at 319–329 (DHVEGRTDGPE) shows a compositional bias: basic and acidic residues. Residues 360 to 369 (PWEDAEETSS) show a composition bias toward acidic residues. The residue at position 375 (tyrosine 375) is a Phosphotyrosine.

As to quaternary structure, when phosphorylated, interacts with GRB2, PIK3R1 and GRAP2. In terms of processing, phosphorylated on tyrosines upon TCR or BCR activation; which leads to the recruitment of GRB2, PIK3R1 and GRAP2.

It localises to the cell membrane. Functionally, negatively regulates TCR (T-cell antigen receptor)-mediated signaling in T-cells and BCR (B-cell antigen receptor)-mediated signaling in B-cells. The protein is Lymphocyte transmembrane adapter 1 (LAX1) of Bos taurus (Bovine).